The primary structure comprises 492 residues: MQFSCDPDQEGDELPQYEHIYQNDFSYRKHKKQKEEDISICECKFDFGDPDSACGERCLNVITNTECTPGYCPCGVYCKNQKFQKCEYAKTKLIKCEGRGWGLVALEEIKAGQFIMEYCGEVISWKEAKKRAQTYETHGVKDAYIISLNASEAIDATKKGSLARFINHSCRPNCETRKWNVLGEVRVGIFAKESISPRTELAYDYNFEWYGGAKVRCLCGAVACSGFLGAKSRGFQEDTYVWEDGDDRYSVDKIPVYDSAEDELTSEPSKNGESNTNEEKEKDISTENHLESTALNIQQQSDSTPTPMEEDVVTETVKTETSEDMKLLSQNSQEDSSPKTAIVSRVHGNISKIKSESLPKKRGRPFSGGKTKNVAQKHVDIANVVQLLATKEAQDEVLKYEEVKKEAAVRLSSLYDEIRPAIEEHERDSQDSVATSVAEKWIQASCNKLKAEFDLYSSVIKNIASTPIKPQDTKTKVAEAGNEDHIKLLEAK.

One can recognise an AWS domain in the interval 36 to 87; it reads EDISICECKFDFGDPDSACGERCLNVITNTECTPGYCPCGVYCKNQKFQKCE. In terms of domain architecture, SET spans 84–206; that stretch reads QKCEYAKTKL…PRTELAYDYN (123 aa). A Post-SET domain is found at 213-229; it reads AKVRCLCGAVACSGFLG. The tract at residues 259 to 340 is disordered; sequence SAEDELTSEP…NSQEDSSPKT (82 aa). A compositionally biased stretch (polar residues) spans 266 to 275; it reads SEPSKNGESN. Positions 277–290 are enriched in basic and acidic residues; the sequence is NEEKEKDISTENHL. Positions 291–306 are enriched in polar residues; it reads ESTALNIQQQSDSTPT. Over residues 317–326 the composition is skewed to basic and acidic residues; it reads VKTETSEDMK. Over residues 328-339 the composition is skewed to polar residues; the sequence is LSQNSQEDSSPK.

This sequence belongs to the class V-like SAM-binding methyltransferase superfamily. Histone-lysine methyltransferase family. SET2 subfamily.

The protein localises to the nucleus. Its subcellular location is the chromosome. It is found in the centromere. The enzyme catalyses L-lysyl(4)-[histone H3] + 3 S-adenosyl-L-methionine = N(6),N(6),N(6)-trimethyl-L-lysyl(4)-[histone H3] + 3 S-adenosyl-L-homocysteine + 3 H(+). Its function is as follows. Histone methyltransferase involved in regulation of flowering time. Required for the expression of the SOC1/AGL20 gene. Required for histone H3 trimethylation on 'Lys-4' (H3K4me3) at the SOC1 locus. Prevents trimethylation on 'Lys-27' (H3K27me3) at the same locus. This chain is Histone-lysine N-methyltransferase ASHH1 (ASHH1), found in Arabidopsis thaliana (Mouse-ear cress).